The following is a 513-amino-acid chain: Ankyrin repeat-containing protein YIL001W (513 aa).

2 ANK repeats span residues 8–37 (KNFEELCYSCRTGDMDNVDRLISTGVNVNS) and 41–70 (FDNSPLFLASLCGHEAVVKLLLQRGAVCDR). BTB domains lie at 122-179 (RDIT…KFLY) and 274-360 (PDVQ…DIPW).

In Saccharomyces cerevisiae (strain ATCC 204508 / S288c) (Baker's yeast), this protein is Ankyrin repeat-containing protein YIL001W.